Reading from the N-terminus, the 390-residue chain is S-adenosylmethionine synthase 1 (390 aa).

Glutamate 9 is a binding site for Mg(2+). Histidine 15 contributes to the ATP binding site. Residue glutamate 43 participates in K(+) binding. Glutamate 56 and glutamine 99 together coordinate L-methionine. Residues 167 to 169 (DGK), 235 to 238 (SGRF), aspartate 246, 252 to 253 (RK), alanine 269, lysine 273, and lysine 277 each bind ATP. Residue aspartate 246 participates in L-methionine binding. An L-methionine-binding site is contributed by lysine 277.

The protein belongs to the AdoMet synthase family. Homotetramer. Requires Mn(2+) as cofactor. It depends on Mg(2+) as a cofactor. Co(2+) serves as cofactor. The cofactor is K(+).

The protein resides in the cytoplasm. The enzyme catalyses L-methionine + ATP + H2O = S-adenosyl-L-methionine + phosphate + diphosphate. It participates in amino-acid biosynthesis; S-adenosyl-L-methionine biosynthesis; S-adenosyl-L-methionine from L-methionine: step 1/1. Functionally, catalyzes the formation of S-adenosylmethionine from methionine and ATP. The reaction comprises two steps that are both catalyzed by the same enzyme: formation of S-adenosylmethionine (AdoMet) and triphosphate, and subsequent hydrolysis of the triphosphate. In Nicotiana tabacum (Common tobacco), this protein is S-adenosylmethionine synthase 1 (SAMS1).